A 430-amino-acid chain; its full sequence is Adenylosuccinate synthetase (430 aa).

GTP-binding positions include 13-19 (GDEGKGK) and 41-43 (GHT). The Proton acceptor role is filled by Asp-14. Mg(2+) contacts are provided by Asp-14 and Gly-41. Residues 14 to 17 (DEGK), 39 to 42 (NAGH), Thr-130, Arg-144, Gln-225, Thr-240, and Arg-304 each bind IMP. Catalysis depends on His-42, which acts as the Proton donor. 300–306 (ATTGRAR) provides a ligand contact to substrate. GTP contacts are provided by residues Arg-306, 332-334 (KLD), and 414-416 (STG).

Belongs to the adenylosuccinate synthetase family. In terms of assembly, homodimer. Requires Mg(2+) as cofactor.

The protein localises to the cytoplasm. It carries out the reaction IMP + L-aspartate + GTP = N(6)-(1,2-dicarboxyethyl)-AMP + GDP + phosphate + 2 H(+). Its pathway is purine metabolism; AMP biosynthesis via de novo pathway; AMP from IMP: step 1/2. Functionally, plays an important role in the de novo pathway of purine nucleotide biosynthesis. Catalyzes the first committed step in the biosynthesis of AMP from IMP. The sequence is that of Adenylosuccinate synthetase from Pseudomonas paraeruginosa (strain DSM 24068 / PA7) (Pseudomonas aeruginosa (strain PA7)).